The following is a 160-amino-acid chain: Phosphopantetheine adenylyltransferase (160 aa).

Thr10 contributes to the substrate binding site. Residues 10–11 (TF) and His18 contribute to the ATP site. Residues Lys42, Met74, and Arg88 each coordinate substrate. Residues 89 to 91 (GVR), Glu99, and 124 to 130 (WSYISST) contribute to the ATP site.

This sequence belongs to the bacterial CoaD family. As to quaternary structure, homohexamer. Mg(2+) serves as cofactor.

The protein localises to the cytoplasm. It catalyses the reaction (R)-4'-phosphopantetheine + ATP + H(+) = 3'-dephospho-CoA + diphosphate. It functions in the pathway cofactor biosynthesis; coenzyme A biosynthesis; CoA from (R)-pantothenate: step 4/5. Its function is as follows. Reversibly transfers an adenylyl group from ATP to 4'-phosphopantetheine, yielding dephospho-CoA (dPCoA) and pyrophosphate. This chain is Phosphopantetheine adenylyltransferase, found in Sodalis glossinidius (strain morsitans).